The primary structure comprises 80 residues: MKVWSQRLSFLIVMIFILAGLHSSSAGRKLPSMTTTEEFQRLSFDGKRILSEVTADKKYDRIYGASARLVPKGPNPLHNK.

Positions 1–26 (MKVWSQRLSFLIVMIFILAGLHSSSA) are cleaved as a signal peptide. Residues Pro-71 and Pro-74 each carry the hydroxyproline modification. O-linked (Ara...) hydroxyproline glycosylation is present at Pro-74.

It belongs to the CLV3/ESR signal peptide family. Interacts with the extracellular leucine-rich repeat region of CLV2 and PEPR2. The O-glycosylation (arabinosylation) of the hydroxyproline Pro-74 enhances binding affinity of the CLE14p peptide for its receptor. As to expression, mostly expressed in roots, and, to a lower extent, in seedlings and leaves. Expressed in the primary root tip under Pi deficiency.

It localises to the secreted. Its subcellular location is the extracellular space. Its function is as follows. Extracellular signal peptide that regulates cell fate. Represses root apical meristem maintenance. Acts as an elicitor of the root meristem differentiation through the CLV2/CRN complex signaling pathway. Inhibits irreversibly root growth by reducing cell division rates in the root apical meristem. Regulates the transition of protophloem cells from proliferation to differentiation, thus impinging on postembryonic growth capacity of the root meristem; this signaling pathway requires CRN and CLV2. The protein is CLAVATA3/ESR (CLE)-related protein 14 of Arabidopsis thaliana (Mouse-ear cress).